Consider the following 713-residue polypeptide: Ribosomal RNA large subunit methyltransferase K/L (713 aa).

In terms of domain architecture, THUMP spans 43–154; sequence LAYRITLWTR…NGVITIAMNF (112 aa).

Belongs to the methyltransferase superfamily. RlmKL family.

The protein localises to the cytoplasm. It carries out the reaction guanosine(2445) in 23S rRNA + S-adenosyl-L-methionine = N(2)-methylguanosine(2445) in 23S rRNA + S-adenosyl-L-homocysteine + H(+). It catalyses the reaction guanosine(2069) in 23S rRNA + S-adenosyl-L-methionine = N(2)-methylguanosine(2069) in 23S rRNA + S-adenosyl-L-homocysteine + H(+). Its function is as follows. Specifically methylates the guanine in position 2445 (m2G2445) and the guanine in position 2069 (m7G2069) of 23S rRNA. The protein is Ribosomal RNA large subunit methyltransferase K/L of Shewanella sp. (strain MR-4).